A 130-amino-acid polypeptide reads, in one-letter code: Small ribosomal subunit protein uS8 (130 aa).

It belongs to the universal ribosomal protein uS8 family. Part of the 30S ribosomal subunit.

In terms of biological role, one of the primary rRNA binding proteins, it binds directly to 16S rRNA central domain where it helps coordinate assembly of the platform of the 30S subunit. The polypeptide is Small ribosomal subunit protein uS8 (Methanobrevibacter smithii (strain ATCC 35061 / DSM 861 / OCM 144 / PS)).